The chain runs to 542 residues: Putative CTP synthase (542 aa).

The tract at residues 1–277 (MEIDLMKHIQ…HKTILDFFSL (277 aa)) is amidoligase domain. Serine 23 contacts CTP. Residue serine 23 coordinates UTP. ATP contacts are provided by residues 24-29 (SLGKGV) and aspartate 81. Aspartate 81 and glutamate 151 together coordinate Mg(2+). CTP is bound by residues 158 to 160 (DIE), 198 to 203 (KTKPTQ), and lysine 234. UTP contacts are provided by residues 198 to 203 (KTKPTQ) and lysine 234. The 233-residue stretch at 310–542 (YVELPDAYKS…LKMSLKIKES (233 aa)) folds into the Glutamine amidotransferase type-1 domain. The active site involves glutamate 517.

It belongs to the CTP synthase family. Homotetramer.

The catalysed reaction is UTP + L-glutamine + ATP + H2O = CTP + L-glutamate + ADP + phosphate + 2 H(+). The enzyme catalyses L-glutamine + H2O = L-glutamate + NH4(+). It carries out the reaction UTP + NH4(+) + ATP = CTP + ADP + phosphate + 2 H(+). The protein operates within pyrimidine metabolism; CTP biosynthesis via de novo pathway; CTP from UDP: step 2/2. Allosterically activated by GTP, when glutamine is the substrate; GTP has no effect on the reaction when ammonia is the substrate. The allosteric effector GTP functions by stabilizing the protein conformation that binds the tetrahedral intermediate(s) formed during glutamine hydrolysis. Inhibited by the product CTP, via allosteric rather than competitive inhibition. In terms of biological role, catalyzes the ATP-dependent amination of UTP to CTP with either L-glutamine or ammonia as the source of nitrogen. Regulates intracellular CTP levels through interactions with the four ribonucleotide triphosphates. This chain is Putative CTP synthase, found in Ureaplasma parvum serovar 3 (strain ATCC 700970).